The primary structure comprises 166 residues: MQKVTFKEETYQLEGKALKVGDKAPDVKLVNGDLQEVNLLKQGVRFQVVSALPSLTGSVCLLQAKHFNEQTGKLPSVSFSVISMDLPFSQGQICGAEGIKDLRILSDFRYKAFGENYGVLLGKGSLQGLLARSVFVLDDKGVVIYKEIVQNILEEPNYEALLKVLK.

Residues 18 to 166 (LKVGDKAPDV…NYEALLKVLK (149 aa)) form the Thioredoxin domain. Cysteine 60 acts as the Cysteine sulfenic acid (-SOH) intermediate in catalysis. Cysteines 60 and 94 form a disulfide.

Belongs to the peroxiredoxin family. Tpx subfamily. Homodimer.

The enzyme catalyses a hydroperoxide + [thioredoxin]-dithiol = an alcohol + [thioredoxin]-disulfide + H2O. In terms of biological role, thiol-specific peroxidase that catalyzes the reduction of hydrogen peroxide and organic hydroperoxides to water and alcohols, respectively. Plays a role in cell protection against oxidative stress by detoxifying peroxides. The protein is Thiol peroxidase of Helicobacter pylori (strain ATCC 700392 / 26695) (Campylobacter pylori).